Reading from the N-terminus, the 154-residue chain is Superoxide dismutase [Cu-Zn] (154 aa).

Residues His47, His49, and His64 each contribute to the Cu cation site. The cysteines at positions 58 and 147 are disulfide-linked. Residues His64, His72, His81, and Asp84 each contribute to the Zn(2+) site. His121 contributes to the Cu cation binding site. A substrate-binding site is contributed by Arg144.

It belongs to the Cu-Zn superoxide dismutase family. As to quaternary structure, homodimer. The cofactor is Cu cation. It depends on Zn(2+) as a cofactor.

It localises to the cytoplasm. The enzyme catalyses 2 superoxide + 2 H(+) = H2O2 + O2. In terms of biological role, destroys radicals which are normally produced within the cells and which are toxic to biological systems. This Candida albicans (Yeast) protein is Superoxide dismutase [Cu-Zn] (SOD1).